A 137-amino-acid polypeptide reads, in one-letter code: Transcription antitermination protein NusB (137 aa).

Belongs to the NusB family.

Involved in transcription antitermination. Required for transcription of ribosomal RNA (rRNA) genes. Binds specifically to the boxA antiterminator sequence of the ribosomal RNA (rrn) operons. The chain is Transcription antitermination protein NusB from Haemophilus ducreyi (strain 35000HP / ATCC 700724).